The sequence spans 628 residues: tRNA uridine 5-carboxymethylaminomethyl modification enzyme MnmG (628 aa).

FAD contacts are provided by residues 14-19 (GAGHAG), V126, and S181. 273–287 (GPRYCPSIEDKVVRF) lines the NAD(+) pocket. Residue Q370 coordinates FAD.

Belongs to the MnmG family. Homodimer. Heterotetramer of two MnmE and two MnmG subunits. FAD is required as a cofactor.

The protein localises to the cytoplasm. Its function is as follows. NAD-binding protein involved in the addition of a carboxymethylaminomethyl (cmnm) group at the wobble position (U34) of certain tRNAs, forming tRNA-cmnm(5)s(2)U34. In Exiguobacterium sibiricum (strain DSM 17290 / CCUG 55495 / CIP 109462 / JCM 13490 / 255-15), this protein is tRNA uridine 5-carboxymethylaminomethyl modification enzyme MnmG.